The following is a 457-amino-acid chain: Bifunctional protein GlmU (457 aa).

The segment at 1–229 (MSNSAKSVVI…LSEMEGVNNR (229 aa)) is pyrophosphorylase. UDP-N-acetyl-alpha-D-glucosamine is bound by residues 11–14 (LAAG), lysine 25, glutamine 76, 81–82 (GT), 103–105 (YGD), glycine 140, glutamate 154, asparagine 169, and asparagine 227. Mg(2+) is bound at residue aspartate 105. Asparagine 227 contacts Mg(2+). Positions 230–250 (LQLSALERIYQSEQAEQLLLA) are linker. The segment at 251-457 (GVMLLDPARF…GWKRPVKEKK (207 aa)) is N-acetyltransferase. Residues arginine 333 and lysine 351 each contribute to the UDP-N-acetyl-alpha-D-glucosamine site. Residue histidine 363 is the Proton acceptor of the active site. Positions 366 and 377 each coordinate UDP-N-acetyl-alpha-D-glucosamine. Acetyl-CoA is bound by residues alanine 380, 386–387 (NY), serine 405, alanine 423, and arginine 440.

This sequence in the N-terminal section; belongs to the N-acetylglucosamine-1-phosphate uridyltransferase family. The protein in the C-terminal section; belongs to the transferase hexapeptide repeat family. As to quaternary structure, homotrimer. Requires Mg(2+) as cofactor.

The protein localises to the cytoplasm. It carries out the reaction alpha-D-glucosamine 1-phosphate + acetyl-CoA = N-acetyl-alpha-D-glucosamine 1-phosphate + CoA + H(+). It catalyses the reaction N-acetyl-alpha-D-glucosamine 1-phosphate + UTP + H(+) = UDP-N-acetyl-alpha-D-glucosamine + diphosphate. Its pathway is nucleotide-sugar biosynthesis; UDP-N-acetyl-alpha-D-glucosamine biosynthesis; N-acetyl-alpha-D-glucosamine 1-phosphate from alpha-D-glucosamine 6-phosphate (route II): step 2/2. The protein operates within nucleotide-sugar biosynthesis; UDP-N-acetyl-alpha-D-glucosamine biosynthesis; UDP-N-acetyl-alpha-D-glucosamine from N-acetyl-alpha-D-glucosamine 1-phosphate: step 1/1. It functions in the pathway bacterial outer membrane biogenesis; LPS lipid A biosynthesis. Functionally, catalyzes the last two sequential reactions in the de novo biosynthetic pathway for UDP-N-acetylglucosamine (UDP-GlcNAc). The C-terminal domain catalyzes the transfer of acetyl group from acetyl coenzyme A to glucosamine-1-phosphate (GlcN-1-P) to produce N-acetylglucosamine-1-phosphate (GlcNAc-1-P), which is converted into UDP-GlcNAc by the transfer of uridine 5-monophosphate (from uridine 5-triphosphate), a reaction catalyzed by the N-terminal domain. This Photorhabdus laumondii subsp. laumondii (strain DSM 15139 / CIP 105565 / TT01) (Photorhabdus luminescens subsp. laumondii) protein is Bifunctional protein GlmU.